The sequence spans 849 residues: Leucine--tRNA ligase (849 aa).

Positions P44–H54 match the 'HIGH' region motif. The 'KMSKS' region signature appears at K620–S624. K623 is a binding site for ATP.

The protein belongs to the class-I aminoacyl-tRNA synthetase family.

Its subcellular location is the cytoplasm. It carries out the reaction tRNA(Leu) + L-leucine + ATP = L-leucyl-tRNA(Leu) + AMP + diphosphate. This chain is Leucine--tRNA ligase, found in Sphingopyxis alaskensis (strain DSM 13593 / LMG 18877 / RB2256) (Sphingomonas alaskensis).